A 481-amino-acid chain; its full sequence is Aspartyl/glutamyl-tRNA(Asn/Gln) amidotransferase subunit B (481 aa).

It belongs to the GatB/GatE family. GatB subfamily. Heterotrimer of A, B and C subunits.

The enzyme catalyses L-glutamyl-tRNA(Gln) + L-glutamine + ATP + H2O = L-glutaminyl-tRNA(Gln) + L-glutamate + ADP + phosphate + H(+). It carries out the reaction L-aspartyl-tRNA(Asn) + L-glutamine + ATP + H2O = L-asparaginyl-tRNA(Asn) + L-glutamate + ADP + phosphate + 2 H(+). Functionally, allows the formation of correctly charged Asn-tRNA(Asn) or Gln-tRNA(Gln) through the transamidation of misacylated Asp-tRNA(Asn) or Glu-tRNA(Gln) in organisms which lack either or both of asparaginyl-tRNA or glutaminyl-tRNA synthetases. The reaction takes place in the presence of glutamine and ATP through an activated phospho-Asp-tRNA(Asn) or phospho-Glu-tRNA(Gln). This chain is Aspartyl/glutamyl-tRNA(Asn/Gln) amidotransferase subunit B, found in Pseudomonas savastanoi pv. phaseolicola (strain 1448A / Race 6) (Pseudomonas syringae pv. phaseolicola (strain 1448A / Race 6)).